Consider the following 1401-residue polypeptide: DNA-directed RNA polymerase subunit beta (1401 aa).

Belongs to the RNA polymerase beta chain family. The RNAP catalytic core consists of 2 alpha, 1 beta, 1 beta' and 1 omega subunit. When a sigma factor is associated with the core the holoenzyme is formed, which can initiate transcription.

It carries out the reaction RNA(n) + a ribonucleoside 5'-triphosphate = RNA(n+1) + diphosphate. DNA-dependent RNA polymerase catalyzes the transcription of DNA into RNA using the four ribonucleoside triphosphates as substrates. In Desulforapulum autotrophicum (strain ATCC 43914 / DSM 3382 / VKM B-1955 / HRM2) (Desulfobacterium autotrophicum), this protein is DNA-directed RNA polymerase subunit beta.